Consider the following 239-residue polypeptide: Tetraspanin-9 (239 aa).

Residues 1 to 13 (MARGCLCCLKYMM) lie on the Cytoplasmic side of the membrane. A helical membrane pass occupies residues 14–34 (FLFNLIFWLCGCGLLGVGIWL). Over 35 to 55 (SVSQGNFATFSPSFPSLSAAN) the chain is Extracellular. A helical membrane pass occupies residues 56–76 (LVIVIGTVVMVTGFLGCLGAI). Residues 77–85 (KENKCLLLS) are Cytoplasmic-facing. Residues 86 to 106 (FFIILLIILLTELILLILFFV) traverse the membrane as a helical segment. Topologically, residues 107–203 (YMDKVNENAK…VKMWFDDNKH (97 aa)) are extracellular. Asn-180 carries an N-linked (GlcNAc...) asparagine glycan. The helical transmembrane segment at 204-224 (VLGTIGMCILIIQILGMAFSM) threads the bilayer. At 225 to 239 (TLFQQIHRTGKKYDA) the chain is on the cytoplasmic side.

Belongs to the tetraspanin (TM4SF) family.

The protein localises to the membrane. This chain is Tetraspanin-9 (tspan9), found in Xenopus laevis (African clawed frog).